Here is a 1081-residue protein sequence, read N- to C-terminus: FHIP family protein GA25918 (1081 aa).

Positions Met-1–Gln-11 are enriched in polar residues. Disordered regions lie at residues Met-1 to Arg-31, Ala-504 to Ile-524, Ala-650 to Gly-685, Asn-830 to Ser-913, and Asn-933 to Ala-1027. Ser-508 is subject to Phosphoserine. The segment covering Thr-657–Glu-668 has biased composition (low complexity). Ser-833 is subject to Phosphoserine. The span at Gln-840 to Gln-856 shows a compositional bias: low complexity. The segment covering Arg-857–Ala-876 has biased composition (polar residues). 2 stretches are compositionally biased toward low complexity: residues Ser-891–Ser-913 and Asn-933–Thr-953. Polar residues predominate over residues Cys-954–Gln-963. Residues Ser-964–Thr-993 are compositionally biased toward low complexity. Residues Gln-994–Leu-1010 show a composition bias toward polar residues.

This sequence belongs to the FHIP family.

This Drosophila pseudoobscura pseudoobscura (Fruit fly) protein is FHIP family protein GA25918.